The chain runs to 124 residues: Galanin peptides (124 aa).

The first 19 residues, 1-19 (MARGSVILLGWLLLVVTLS), serve as a signal peptide directing secretion. Residues 20–30 (ATLGLGMPAKE) constitute a propeptide that is removed on maturation. T61 is subject to Threonine amide. S117 and S118 each carry phosphoserine.

Belongs to the galanin family. Expressed in retinal progenitor cells and retinal ganglion cells (at protein level).

The protein resides in the secreted. Endocrine hormone of the central and peripheral nervous systems that binds and activates the G protein-coupled receptors GALR1, GALR2, and GALR3. This small neuropeptide may regulate diverse physiologic functions including contraction of smooth muscle of the gastrointestinal and genitourinary tract, growth hormone and insulin release and adrenal secretion. The protein is Galanin peptides (Gal) of Mus musculus (Mouse).